Consider the following 464-residue polypeptide: Argininosuccinate lyase (464 aa).

Residue Ala2 is modified to N-acetylalanine. Lys7 carries the post-translational modification N6-acetyllysine. Position 27 (Ser27) interacts with 2-(N(omega)-L-arginino)succinate. Lys69 is modified (N6-acetyllysine). 2-(N(omega)-L-arginino)succinate is bound by residues Asn114 and Thr159. His160 (proton acceptor) is an active-site residue. Catalysis depends on Ser281, which acts as the Proton donor. Position 288 is an N6-acetyllysine (Lys288). Residues Asn289, Tyr321, Gln326, and Lys329 each contribute to the 2-(N(omega)-L-arginino)succinate site.

The protein belongs to the lyase 1 family. Argininosuccinate lyase subfamily. In terms of assembly, homotetramer. Forms tissue-specific complexes with ASS1, SLC7A1, HSP90AA1 and nitric oxide synthase NOS1, NOS2 or NOS3; the complex maintenance is independent of ASL catalytic function. In terms of processing, acetylation modifies enzyme activity in response to alterations of extracellular nutrient availability. Acetylation increased with trichostin A (TSA) or with nicotinamide (NAM). Glucose increases acetylation by about a factor of 3 with decreasing enzyme activity. Acetylation on Lys-288 is decreased on the addition of extra amino acids resulting in activation of enzyme activity. As to expression, expressed in lung and brain (at protein level).

The catalysed reaction is 2-(N(omega)-L-arginino)succinate = fumarate + L-arginine. It participates in amino-acid biosynthesis; L-arginine biosynthesis; L-arginine from L-ornithine and carbamoyl phosphate: step 3/3. It functions in the pathway nitrogen metabolism; urea cycle; L-arginine and fumarate from (N(omega)-L-arginino)succinate: step 1/1. With respect to regulation, enzyme activity is regulated by acetylation. In terms of biological role, catalyzes the reversible cleavage of L-argininosuccinate to fumarate and L-arginine, an intermediate step reaction in the urea cycle mostly providing for hepatic nitrogen detoxification into excretable urea as well as de novo L-arginine synthesis in nonhepatic tissues. Essential regulator of intracellular and extracellular L-arginine pools. As part of citrulline-nitric oxide cycle, forms tissue-specific multiprotein complexes with argininosuccinate synthase ASS1, transport protein SLC7A1 and nitric oxide synthase NOS1, NOS2 or NOS3, allowing for cell-autonomous L-arginine synthesis while channeling extracellular L-arginine to nitric oxide synthesis pathway. The polypeptide is Argininosuccinate lyase (Asl) (Mus musculus (Mouse)).